A 594-amino-acid polypeptide reads, in one-letter code: Potassium-transporting ATPase potassium-binding subunit (594 aa).

Transmembrane regions (helical) follow at residues 3–23, 67–87, 136–156, 179–199, 287–307, 314–334, 415–435, 453–473, 519–539, and 562–582; these read ADFL…APLL, AVAM…LQRL, ALTV…IALV, LYVL…QGVV, LEML…GEMV, VAIL…AAYF, GLYG…LMIG, VALV…VAVL, VLLG…ILAL, and LFVA…YVPA.

This sequence belongs to the KdpA family. The system is composed of three essential subunits: KdpA, KdpB and KdpC.

It localises to the cell inner membrane. In terms of biological role, part of the high-affinity ATP-driven potassium transport (or Kdp) system, which catalyzes the hydrolysis of ATP coupled with the electrogenic transport of potassium into the cytoplasm. This subunit binds the periplasmic potassium ions and delivers the ions to the membrane domain of KdpB through an intramembrane tunnel. The sequence is that of Potassium-transporting ATPase potassium-binding subunit from Bordetella parapertussis (strain 12822 / ATCC BAA-587 / NCTC 13253).